Consider the following 311-residue polypeptide: Ribosomal RNA small subunit methyltransferase H (311 aa).

Residues 34 to 36, Asp54, Phe78, Asp100, and Gln107 contribute to the S-adenosyl-L-methionine site; that span reads GGH.

It belongs to the methyltransferase superfamily. RsmH family.

It localises to the cytoplasm. The catalysed reaction is cytidine(1402) in 16S rRNA + S-adenosyl-L-methionine = N(4)-methylcytidine(1402) in 16S rRNA + S-adenosyl-L-homocysteine + H(+). Functionally, specifically methylates the N4 position of cytidine in position 1402 (C1402) of 16S rRNA. The polypeptide is Ribosomal RNA small subunit methyltransferase H (Hamiltonella defensa subsp. Acyrthosiphon pisum (strain 5AT)).